A 214-amino-acid chain; its full sequence is Pyridoxine/pyridoxamine 5'-phosphate oxidase (214 aa).

Residues 9–12 (RKDY) and Lys-67 each bind substrate. Residues 62–67 (RMVLLK), 77–78 (FT), Arg-83, Lys-84, and Gln-106 each bind FMN. Residues Tyr-124, Arg-128, and Ser-132 each contribute to the substrate site. Residues 141-142 (QS) and Trp-186 contribute to the FMN site. Residue 192–194 (RLH) coordinates substrate. Arg-196 contributes to the FMN binding site.

This sequence belongs to the pyridoxamine 5'-phosphate oxidase family. In terms of assembly, homodimer. Requires FMN as cofactor.

The catalysed reaction is pyridoxamine 5'-phosphate + O2 + H2O = pyridoxal 5'-phosphate + H2O2 + NH4(+). It catalyses the reaction pyridoxine 5'-phosphate + O2 = pyridoxal 5'-phosphate + H2O2. The protein operates within cofactor metabolism; pyridoxal 5'-phosphate salvage; pyridoxal 5'-phosphate from pyridoxamine 5'-phosphate: step 1/1. Its pathway is cofactor metabolism; pyridoxal 5'-phosphate salvage; pyridoxal 5'-phosphate from pyridoxine 5'-phosphate: step 1/1. In terms of biological role, catalyzes the oxidation of either pyridoxine 5'-phosphate (PNP) or pyridoxamine 5'-phosphate (PMP) into pyridoxal 5'-phosphate (PLP). This is Pyridoxine/pyridoxamine 5'-phosphate oxidase from Trichormus variabilis (strain ATCC 29413 / PCC 7937) (Anabaena variabilis).